The sequence spans 753 residues: Nigerose phosphorylase (753 aa).

348-349 provides a ligand contact to substrate; that stretch reads WD. The active-site Proton donor is glutamate 490. Residue 604–605 coordinates substrate; that stretch reads KQ.

Belongs to the glycosyl hydrolase 65 family. In terms of assembly, homodimer.

The protein localises to the cytoplasm. The catalysed reaction is nigerose + phosphate = beta-D-glucose 1-phosphate + D-glucose. With respect to regulation, does not require divalent metal ions. Catalyzes the reversible phosphorolysis of nigerose. Also shows a weak activity on kojibiose. This is Nigerose phosphorylase from Lachnoclostridium phytofermentans (strain ATCC 700394 / DSM 18823 / ISDg) (Clostridium phytofermentans).